The primary structure comprises 262 residues: Phosphoribosyl 1,2-cyclic phosphate 1,2-diphosphodiesterase (262 aa).

Mn(2+) contacts are provided by H6, H8, D13, H38, E63, H76, H193, D245, and H247.

Belongs to the PHP family. Mn(2+) serves as cofactor.

It carries out the reaction alpha-D-ribose 1,2-cyclic phosphate 5-phosphate + H2O = D-ribose 2,5-bisphosphate + H(+). It catalyses the reaction D-ribose 2,5-bisphosphate + H2O = D-ribose 5-phosphate + phosphate. Functionally, involved in degradation of methylphosphonate. Catalyzes the hydrolysis of the phosphate ester at carbon-1 of 5-phospho-D-ribose 1,2-cyclic phosphate to form ribose 2,5-bisphosphate. This intermediate is then hydrolyzed to ribose-5-phosphate and inorganic phosphate. The sequence is that of Phosphoribosyl 1,2-cyclic phosphate 1,2-diphosphodiesterase from Eggerthella lenta (strain ATCC 25559 / DSM 2243 / CCUG 17323 / JCM 9979 / KCTC 3265 / NCTC 11813 / VPI 0255 / 1899 B) (Eubacterium lentum).